We begin with the raw amino-acid sequence, 384 residues long: Mannitol-1-phosphate 5-dehydrogenase (384 aa).

3 to 14 (AVHFGAGNIGRG) is a binding site for NAD(+).

The protein belongs to the mannitol dehydrogenase family. In terms of assembly, monomer.

It carries out the reaction D-mannitol 1-phosphate + NAD(+) = beta-D-fructose 6-phosphate + NADH + H(+). The polypeptide is Mannitol-1-phosphate 5-dehydrogenase (mtlD) (Enterococcus faecalis (strain ATCC 700802 / V583)).